The primary structure comprises 517 residues: Nucleolar protein 58 (517 aa).

The Nop domain occupies 283–403 (IAPNLTALVG…VESRLSALEG (121 aa)). Residues 423-517 (EARAYNADAD…DKKEKKKEKK (95 aa)) form a disordered region. Residues 438-448 (ADSDDESETEE) are compositionally biased toward acidic residues. Composition is skewed to basic residues over residues 454–475 (KKDK…KKRK) and 489–517 (KSKK…KEKK). Positions 456–517 (DKKEKKDKKE…DKKEKKKEKK (62 aa)) form a coiled coil.

The protein belongs to the NOP5/NOP56 family.

The protein resides in the nucleus. Its subcellular location is the nucleolus. In terms of biological role, required for pre-18S rRNA processing. May bind microtubules. The protein is Nucleolar protein 58 (NOP58) of Debaryomyces hansenii (strain ATCC 36239 / CBS 767 / BCRC 21394 / JCM 1990 / NBRC 0083 / IGC 2968) (Yeast).